Reading from the N-terminus, the 392-residue chain is MAMPTIRHVRAFIVRGGGADYHDQPGGHWIDDHISTPMARYPEYRQSRQSFGINVLGTLVVEIEASDGTVGFAVTTGGEIGAFIVEKHLARFLEGQLVTDIEKMWDQMYFSTLYYGRKGVVLNTISGVDLALWDLLAKVRKEPVYQLLGGPVRDELVFYATGARPDLAKEMGFIGGKLPLQHGPAEGEAGLKQNLEKLADMRSRVGDDFWLMYDCWMSLDVPYATRLAQAAHEYGLKWIEECLPPDDYWGYAELRRNVPRGMMVSTGEHEATRWGFRMLLEMQCCDLIQPDVGWCGGITELIKISALADAHNVMVVPHGSSVYSYHFVVTRHNSPFAEFLMMAPKADEVVPMFTPLLLDEPVPVNGRMKVPDTPGFGVRLNPECALVRPYPR.

Residues His-22 and Arg-48 each contribute to the substrate site. Residues Asp-214, Glu-240, and Glu-268 each contribute to the Mg(2+) site. The active-site Proton acceptor is His-318. Glu-338 contacts substrate.

Belongs to the mandelate racemase/muconate lactonizing enzyme family. RhamD subfamily. As to quaternary structure, homooctamer; tetramer of dimers. The cofactor is Mg(2+).

The enzyme catalyses L-rhamnonate = 2-dehydro-3-deoxy-L-rhamnonate + H2O. Catalyzes the dehydration of L-rhamnonate to 2-keto-3-deoxy-L-rhamnonate (KDR). This is L-rhamnonate dehydratase from Paraburkholderia phytofirmans (strain DSM 17436 / LMG 22146 / PsJN) (Burkholderia phytofirmans).